A 94-amino-acid polypeptide reads, in one-letter code: Acylphosphatase (94 aa).

Residues Arg-8–Lys-94 enclose the Acylphosphatase-like domain. Residues Arg-23 and Asn-41 contribute to the active site.

It belongs to the acylphosphatase family.

The catalysed reaction is an acyl phosphate + H2O = a carboxylate + phosphate + H(+). In Frankia alni (strain DSM 45986 / CECT 9034 / ACN14a), this protein is Acylphosphatase (acyP).